A 450-amino-acid chain; its full sequence is Probable glycine dehydrogenase (decarboxylating) subunit 1 (450 aa).

Belongs to the GcvP family. N-terminal subunit subfamily. As to quaternary structure, the glycine cleavage system is composed of four proteins: P, T, L and H. In this organism, the P 'protein' is a heterodimer of two subunits.

The catalysed reaction is N(6)-[(R)-lipoyl]-L-lysyl-[glycine-cleavage complex H protein] + glycine + H(+) = N(6)-[(R)-S(8)-aminomethyldihydrolipoyl]-L-lysyl-[glycine-cleavage complex H protein] + CO2. Functionally, the glycine cleavage system catalyzes the degradation of glycine. The P protein binds the alpha-amino group of glycine through its pyridoxal phosphate cofactor; CO(2) is released and the remaining methylamine moiety is then transferred to the lipoamide cofactor of the H protein. The protein is Probable glycine dehydrogenase (decarboxylating) subunit 1 of Brevibacillus brevis (strain 47 / JCM 6285 / NBRC 100599).